The sequence spans 233 residues: Glucosamine-6-phosphate deaminase (233 aa).

Asp-62 acts as the Proton acceptor; for enolization step in catalysis. The active-site For ring-opening step is the Asn-128. His-130 functions as the Proton acceptor; for ring-opening step in the catalytic mechanism. Glu-135 acts as the For ring-opening step in catalysis.

The protein belongs to the glucosamine/galactosamine-6-phosphate isomerase family. NagB subfamily.

The catalysed reaction is alpha-D-glucosamine 6-phosphate + H2O = beta-D-fructose 6-phosphate + NH4(+). The protein operates within amino-sugar metabolism; N-acetylneuraminate degradation; D-fructose 6-phosphate from N-acetylneuraminate: step 5/5. In terms of biological role, catalyzes the reversible isomerization-deamination of glucosamine 6-phosphate (GlcN6P) to form fructose 6-phosphate (Fru6P) and ammonium ion. The chain is Glucosamine-6-phosphate deaminase from Streptococcus thermophilus (strain ATCC BAA-491 / LMD-9).